The chain runs to 430 residues: Agropine synthesis reductase (430 aa).

203–227 (LVSGSNRGVGKAIAEDLIAHGYRLS) contributes to the NAD(+) binding site. Serine 333 contacts substrate. The active-site Proton acceptor is tyrosine 346.

Belongs to the short-chain dehydrogenases/reductases (SDR) family.

It functions in the pathway opine metabolism; mannopine biosynthesis. Functionally, reduces deoxy-fructosyl-glutamine to mannopine. This is Agropine synthesis reductase (mas1) from Rhizobium rhizogenes (Agrobacterium rhizogenes).